We begin with the raw amino-acid sequence, 935 residues long: Formin-I (935 aa).

The stretch at 35 to 76 forms a coiled coil; sequence QQQQQQQQQQINNENENSINNQENKENNNKDNNNNNNKEIKQ. 3 disordered regions span residues 52 to 78, 380 to 511, and 561 to 590; these read SINNQENKENNNKDNNNNNNKEIKQSS, LSSA…QLTP, and KEKMSKENLNNSNNNNNNNSNNNGEEQSLS. Low complexity predominate over residues 384–407; it reads KKQPQQQPQKDVTSSSSSSSNSSS. Polar residues predominate over residues 418–428; sequence ITTNDSSSSNP. Residues 431–443 are compositionally biased toward basic and acidic residues; it reads DFDKLSLSSDDKV. Polar residues predominate over residues 444–454; that stretch reads NNNNVQIENTT. The 62-residue stretch at 444–505 folds into the FH1 domain; it reads NNNNVQIENT…KPNNSGGGGG (62 aa). The span at 456–482 shows a compositional bias: pro residues; the sequence is SVPPPPPVGAPPPPPPPPPPPPPPPPS. Residues 484–499 are compositionally biased toward polar residues; that stretch reads LKLNRNRISTPKKPNN. The 430-residue stretch at 506–935 folds into the FH2 domain; that stretch reads GGQLTPLQKK…SLNLSTLNSK (430 aa). The segment covering 568–583 has biased composition (low complexity); it reads NLNNSNNNNNNNSNNN. Coiled-coil stretches lie at residues 702-730 and 803-834; these read SLLDSIEINNNQLSKAIEQLRNSRKFIKV and QSSLENILEESNEIENKFKQVDQEIQYHQQLL.

Belongs to the formin homology family. Diaphanous subfamily.

In terms of biological role, formins play an important role in the nucleation of actin and the formation of linear actin filaments. The protein is Formin-I (forI) of Dictyostelium discoideum (Social amoeba).